Reading from the N-terminus, the 72-residue chain is Translation initiation factor IF-1 (72 aa).

In terms of domain architecture, S1-like spans 1 to 72 (MAKEETIQMQ…SRARITFRAK (72 aa)).

Belongs to the IF-1 family. In terms of assembly, component of the 30S ribosomal translation pre-initiation complex which assembles on the 30S ribosome in the order IF-2 and IF-3, IF-1 and N-formylmethionyl-tRNA(fMet); mRNA recruitment can occur at any time during PIC assembly.

The protein localises to the cytoplasm. In terms of biological role, one of the essential components for the initiation of protein synthesis. Stabilizes the binding of IF-2 and IF-3 on the 30S subunit to which N-formylmethionyl-tRNA(fMet) subsequently binds. Helps modulate mRNA selection, yielding the 30S pre-initiation complex (PIC). Upon addition of the 50S ribosomal subunit IF-1, IF-2 and IF-3 are released leaving the mature 70S translation initiation complex. The polypeptide is Translation initiation factor IF-1 (Nitrosospira multiformis (strain ATCC 25196 / NCIMB 11849 / C 71)).